We begin with the raw amino-acid sequence, 218 residues long: Molybdenum cofactor guanylyltransferase (218 aa).

Residues leucine 16 to glycine 18, lysine 28, asparagine 56, aspartate 74, and aspartate 109 each bind GTP. Mg(2+) is bound at residue aspartate 109.

It belongs to the MobA family. Monomer. Requires Mg(2+) as cofactor.

The protein localises to the cytoplasm. It catalyses the reaction Mo-molybdopterin + GTP + H(+) = Mo-molybdopterin guanine dinucleotide + diphosphate. Its function is as follows. Transfers a GMP moiety from GTP to Mo-molybdopterin (Mo-MPT) cofactor (Moco or molybdenum cofactor) to form Mo-molybdopterin guanine dinucleotide (Mo-MGD) cofactor. This is Molybdenum cofactor guanylyltransferase from Rhizobium meliloti (strain 1021) (Ensifer meliloti).